An 830-amino-acid chain; its full sequence is Frameshifted structural polyprotein (830 aa).

The disordered stretch occupies residues Ala58 to Glu109. Over residues Pro65–Lys107 the composition is skewed to basic residues. Residues Lys94–Gly106 are ribosome-binding. The cysteines at positions 119 and 134 are disulfide-linked. A Peptidase S3 domain is found at Cys119 to Trp267. Active-site charge relay system residues include His145, Asp167, and Ser219. N-linked (GlcNAc...) asparagine; by host glycans are attached at residues Asn280, Asn327, Asn533, and Asn595. The helical transmembrane segment at Ala702 to Val722 threads the bilayer. 4 S-palmitoyl cysteine; by host lipidation sites follow: Cys718, Cys728, Cys748, and Cys749. Positions Cys728–Cys748 are transient transmembrane before p62-6K protein processing. Helical transmembrane passes span Ala771–Leu791 and Asn793–Arg813.

As to quaternary structure, homodimer. Homomultimer. Interacts with host karyopherin KPNA4; this interaction allows the nuclear import of the viral capsid protein. Precursor of protein E3/E2: The precursor of protein E3/E2 and E1 form a heterodimer shortly after synthesis. Interacts with host IRAK1; the interaction leads to inhibition of IRAK1-dependent signaling. Processing of the precursor of protein E3/E2 into E2 and E3 results in a heterodimer of the spike glycoproteins E2 and E1. Spike at virion surface are constituted of three E2-E1 heterodimers. Interacts with 6K protein. Interacts with host MXRA8; this interaction mediates virus entry. Post-translationally, specific enzymatic cleavages in vivo yield mature proteins. Capsid protein is auto-cleaved during polyprotein translation, unmasking a signal peptide at the N-terminus of the precursor of E3/E2. The remaining polyprotein is then targeted to the host endoplasmic reticulum, where host signal peptidase cleaves it into pE2 and TF. pE2 is further processed to mature E3 and E2 by host furin in trans-Golgi vesicle.

It localises to the virion. The protein resides in the host cytoplasm. The protein localises to the host cell membrane. Its subcellular location is the host nucleus. It is found in the virion membrane. It catalyses the reaction Autocatalytic release of the core protein from the N-terminus of the togavirus structural polyprotein by hydrolysis of a -Trp-|-Ser- bond.. Its function is as follows. Forms an icosahedral capsid with a T=4 symmetry composed of 240 copies of the capsid protein surrounded by a lipid membrane through which penetrate 80 spikes composed of trimers of E1-E2 heterodimers. The capsid protein binds to the viral RNA genome at a site adjacent to a ribosome binding site for viral genome translation following genome release. Possesses a protease activity that results in its autocatalytic cleavage from the nascent structural protein. Following its self-cleavage, the capsid protein transiently associates with ribosomes, and within several minutes the protein binds to viral RNA and rapidly assembles into icosahedric core particles. The resulting nucleocapsid eventually associates with the cytoplasmic domain of the spike glycoprotein E2 at the cell membrane, leading to budding and formation of mature virions. In case of infection, new virions attach to target cells and after clathrin-mediated endocytosis their membrane fuses with the host endosomal membrane. This leads to the release of the nucleocapsid into the cytoplasm, followed by an uncoating event necessary for the genomic RNA to become accessible. The uncoating might be triggered by the interaction of capsid proteins with ribosomes. Binding of ribosomes would release the genomic RNA since the same region is genomic RNA-binding and ribosome-binding. Specifically inhibits interleukin-1 receptor-associated kinase 1/IRAK1-dependent signaling during viral entry, representing a means by which the alphaviruses may evade innate immune detection and activation prior to viral gene expression. Functionally, provides the signal sequence for p62 (E3/E2) translocation to the host endoplasmic reticulum. Mediates pH protection of E1 during secretory pathway trans- port. In terms of biological role, plays a role in viral attachment to target host cell, by binding to the cell receptor. Synthesized as a p62 precursor which is processed by furin at the cell membrane just before virion budding, giving rise to E2-E1 heterodimer. The p62-E1 heterodimer is stable, whereas E2-E1 is unstable and dissociate at low pH. p62 is processed at the last step, presumably to avoid E1 fusion activation before its final export to cell surface. E2 C-terminus contains a transitory transmembrane that would be disrupted by palmitoylation, resulting in reorientation of the C-terminal tail from lumenal to cytoplasmic side. This step is critical since E2 C-terminus is involved in budding by interacting with capsid proteins. This release of E2 C-terminus in cytoplasm occurs lately in protein export, and precludes premature assembly of particles at the endoplasmic reticulum membrane. Virion component that may play a role during viral assembly. The sequence is that of Frameshifted structural polyprotein from Aedes (Middle-African hedgehog).